We begin with the raw amino-acid sequence, 382 residues long: Anhydro-N-acetylmuramic acid kinase (382 aa).

9–16 (GTSLDGID) contributes to the ATP binding site.

The protein belongs to the anhydro-N-acetylmuramic acid kinase family.

It catalyses the reaction 1,6-anhydro-N-acetyl-beta-muramate + ATP + H2O = N-acetyl-D-muramate 6-phosphate + ADP + H(+). It participates in amino-sugar metabolism; 1,6-anhydro-N-acetylmuramate degradation. Its pathway is cell wall biogenesis; peptidoglycan recycling. Its function is as follows. Catalyzes the specific phosphorylation of 1,6-anhydro-N-acetylmuramic acid (anhMurNAc) with the simultaneous cleavage of the 1,6-anhydro ring, generating MurNAc-6-P. Is required for the utilization of anhMurNAc either imported from the medium or derived from its own cell wall murein, and thus plays a role in cell wall recycling. This chain is Anhydro-N-acetylmuramic acid kinase, found in Bacillus cereus (strain 03BB102).